Consider the following 1076-residue polypeptide: DNA-directed RNA polymerase subunit beta (1076 aa).

This sequence belongs to the RNA polymerase beta chain family. In plastids the minimal PEP RNA polymerase catalytic core is composed of four subunits: alpha, beta, beta', and beta''. When a (nuclear-encoded) sigma factor is associated with the core the holoenzyme is formed, which can initiate transcription.

The protein localises to the plastid. It localises to the chloroplast. It carries out the reaction RNA(n) + a ribonucleoside 5'-triphosphate = RNA(n+1) + diphosphate. Functionally, DNA-dependent RNA polymerase catalyzes the transcription of DNA into RNA using the four ribonucleoside triphosphates as substrates. The polypeptide is DNA-directed RNA polymerase subunit beta (Triticum aestivum (Wheat)).